We begin with the raw amino-acid sequence, 208 residues long: Small ribosomal subunit protein uS4 (208 aa).

A disordered region spans residues 24–52; the sequence is GVKPFDVKTKKANKAPGQHGQARGGKQSE. Residues 98–160 enclose the S4 RNA-binding domain; it reads SRLDNVVYRM…AKQQLRIKNA (63 aa).

Belongs to the universal ribosomal protein uS4 family. As to quaternary structure, part of the 30S ribosomal subunit. Contacts protein S5. The interaction surface between S4 and S5 is involved in control of translational fidelity.

Its function is as follows. One of the primary rRNA binding proteins, it binds directly to 16S rRNA where it nucleates assembly of the body of the 30S subunit. In terms of biological role, with S5 and S12 plays an important role in translational accuracy. This chain is Small ribosomal subunit protein uS4, found in Acinetobacter baumannii (strain ACICU).